The following is a 71-amino-acid chain: Probable ribosome maturation protein RlbA (71 aa).

The 58-residue stretch at 12 to 69 (ITLGQFLKLADVIQSGGMAKWFLSEHEVLVNDEPDNRRGRKLYVGDVVEIEGFGSFQV) folds into the S4 RNA-binding domain.

In terms of biological role, may assist in the assembly of the 50S subunit. The sequence is that of Probable ribosome maturation protein RlbA from Bacillus subtilis (strain 168).